The sequence spans 250 residues: mRNA-decapping protein g5R (250 aa).

The region spanning 97–243 is the Nudix hydrolase domain; that stretch reads QKFRKNWLLP…IIGPAFNFIK (147 aa). The short motif at 132-153 is the Nudix box element; the sequence is GKPKEDESDLTCAIREFEEETG. Glutamate 138 is a binding site for Mg(2+). The Nucleophile role is filled by glutamate 147. Mg(2+) contacts are provided by glutamate 151 and aspartate 173.

It belongs to the Nudix hydrolase family. DIPP subfamily. As to quaternary structure, interacts with host RPL23A. Requires Mg(2+) as cofactor. It depends on Mn(2+) as a cofactor.

Its subcellular location is the host rough endoplasmic reticulum. The catalysed reaction is diphospho-myo-inositol polyphosphate + H2O = myo-inositol polyphosphate + phosphate.. In terms of biological role, decapping enzyme required for the removal of the 5'-end m7GpppN cap tethered to viral and host mRNAs to allow their decay in cells. May therefore accelerate viral and cellular mRNA turnover to eliminate competing host mRNAs and allow stage-specific synthesis of viral proteins. Acceleration of the turnover of cellular transcripts may even promote the shutoff of host protein synthesis. In addition to the mRNA cap, g5R also efficiently hydrolyzes diphosphoinositol polyphosphates. Down-regulation of the level of PP-InsP5 (diphosphoinositol pentakisphosphate) may play a role in viral manipulation of the cellular secretory pathway, a step necessary for the formation of virions. Binds viral and cellular poly(A) mRNAs, thereby decreasing both types of mRNAs. The chain is mRNA-decapping protein g5R from African swine fever virus (isolate Tick/South Africa/Pretoriuskop Pr4/1996) (ASFV).